Reading from the N-terminus, the 469-residue chain is MADSASESDTDAAGGGPAAMQSSCSATSGGSGGGGGGKSGGIVISPFRLEELTNRLASLQQENKVLKIELETYKLKCKALQEENRDLRKASVTIQARAEQEEEFISNTLFKKIQALQKEKETLAVNYEKEEEFLTNELSRKLMQLQHEKAELEQHLEQEQEFQVNKLMKKIKKLENDTISKQLTLEQLRREKIDLENTLEQEQEALVNRLWKRMDKLEAEKRILQEKLDQPVSAPPSPRDISMEIDSPENMMRHIRFLKNEVERLKKQLRAAQLQHSEKMAQYLEEERHMREENLRLQRKLQREMERREALCRQLSESESSLEMDDERYFNEMSAQGLRPRTVSSPIPYTPSPSSSRPISPGLSYASHTVGFTPPTSLTRAGMSYYNSPGLHVQHMGASHGITRPSPRRSSSPDKFKRPTPPPSPNTQSPVQPPPPPPPPPMQPAVPSAAPTQPAPTQPQHPVHPSSQP.

The segment covering methionine 1 to threonine 10 has biased composition (acidic residues). The interval methionine 1–glycine 37 is disordered. Alanine 2 is modified (N-acetylalanine). Serine 45 is modified (phosphoserine). Residues phenylalanine 47–serine 320 adopt a coiled-coil conformation. 3 consecutive repeat copies span residues glutamate 99 to tyrosine 127, glutamate 128 to leucine 156, and glutamate 157 to leucine 185. The interval glutamate 99–leucine 228 is 5 X 29 AA tandem repeats. Residues glutamate 186–leucine 199 form a 4; approximate repeat. Repeat 5 spans residues glutamate 200–leucine 228. Phosphoserine occurs at positions 233, 237, 242, 247, 277, and 316. Positions alanine 335 to glycine 362 are disordered. The residue at position 342 (threonine 342) is a Phosphothreonine. Low complexity predominate over residues serine 344–proline 361. Residues serine 356 and serine 360 each carry the phosphoserine modification. Position 380 is an omega-N-methylarginine (arginine 380). A phosphoserine mark is found at serine 388 and serine 406. Positions glutamine 394 to proline 469 are disordered. Over residues proline 419–proline 444 the composition is skewed to pro residues. An SH3-binding motif is present at residues proline 435 to proline 444. Over residues glutamine 460–proline 469 the composition is skewed to low complexity.

The protein localises to the cytoplasm. Its subcellular location is the cytoskeleton. The sequence is that of Coiled-coil domain-containing protein 6 (Ccdc6) from Mus musculus (Mouse).